The chain runs to 177 residues: Peptide methionine sulfoxide reductase MsrA (177 aa).

Cys-10 is an active-site residue.

Belongs to the MsrA Met sulfoxide reductase family.

It catalyses the reaction L-methionyl-[protein] + [thioredoxin]-disulfide + H2O = L-methionyl-(S)-S-oxide-[protein] + [thioredoxin]-dithiol. The enzyme catalyses [thioredoxin]-disulfide + L-methionine + H2O = L-methionine (S)-S-oxide + [thioredoxin]-dithiol. In terms of biological role, has an important function as a repair enzyme for proteins that have been inactivated by oxidation. Catalyzes the reversible oxidation-reduction of methionine sulfoxide in proteins to methionine. The sequence is that of Peptide methionine sulfoxide reductase MsrA from Saccharolobus solfataricus (strain ATCC 35092 / DSM 1617 / JCM 11322 / P2) (Sulfolobus solfataricus).